The following is an 891-amino-acid chain: Aconitate hydratase A (891 aa).

[4Fe-4S] cluster is bound by residues C435, C501, and C504.

The protein belongs to the aconitase/IPM isomerase family. In terms of assembly, monomer. [4Fe-4S] cluster is required as a cofactor.

It catalyses the reaction citrate = D-threo-isocitrate. The catalysed reaction is (2S,3R)-3-hydroxybutane-1,2,3-tricarboxylate = 2-methyl-cis-aconitate + H2O. Its pathway is carbohydrate metabolism; tricarboxylic acid cycle; isocitrate from oxaloacetate: step 2/2. It functions in the pathway organic acid metabolism; propanoate degradation. Its function is as follows. Involved in the catabolism of short chain fatty acids (SCFA) via the tricarboxylic acid (TCA)(acetyl degradation route) and the 2-methylcitrate cycle I (propionate degradation route). Catalyzes the reversible isomerization of citrate to isocitrate via cis-aconitate. Also catalyzes the hydration of 2-methyl-cis-aconitate to yield (2R,3S)-2-methylisocitrate. The (2S,3S)-2-methylcitrate (2-MC) is a very poor substrate. The apo form of AcnA functions as a RNA-binding regulatory protein. The polypeptide is Aconitate hydratase A (acnA) (Salmonella typhimurium (strain LT2 / SGSC1412 / ATCC 700720)).